The chain runs to 248 residues: Small ribosomal subunit protein uS3 (248 aa).

The KH type-2 domain occupies 38–106 (IREFLSEGLE…QVQLNILEVK (69 aa)). Over residues 214 to 229 (SLMNARDERPSRGGRR) the composition is skewed to basic and acidic residues. Positions 214–248 (SLMNARDERPSRGGRRERPRRGGARRQRAEKKQEG) are disordered. The segment covering 230 to 242 (ERPRRGGARRQRA) has biased composition (basic residues).

Belongs to the universal ribosomal protein uS3 family. Part of the 30S ribosomal subunit. Forms a tight complex with proteins S10 and S14.

In terms of biological role, binds the lower part of the 30S subunit head. Binds mRNA in the 70S ribosome, positioning it for translation. This is Small ribosomal subunit protein uS3 from Corynebacterium urealyticum (strain ATCC 43042 / DSM 7109).